The chain runs to 214 residues: uncharacterized protein (214 aa).

A signal peptide spans methionine 1–alanine 24. Positions glutamate 64 to isoleucine 197 constitute a TNase-like domain. Active-site residues include arginine 91, glutamate 99, and arginine 142.

This is an uncharacterized protein from Bacillus anthracis.